Here is a 144-residue protein sequence, read N- to C-terminus: Interleukin-9 (144 aa).

The signal sequence occupies residues 1-18 (MLLAMVLTSALLLCSVAG). Glutamine 19 is subject to Pyrrolidone carboxylic acid. N-linked (GlcNAc...) asparagine glycosylation is found at asparagine 50, asparagine 63, asparagine 78, and asparagine 114.

It belongs to the IL-7/IL-9 family. Interacts with IL9R. Interacts with IL2RG.

The protein resides in the secreted. Its function is as follows. Multifunctional cytokine secreted mainly by T-helper 2 lymphocytes and also mast cells or NKT cells that plays important roles in the immune response against parasites. Affects intestinal epithelial permeability and adaptive immunity. In addition, induces the differentiation of specific T-cell subsets such as IL-17 producing helper T-cells (TH17) and also proliferation and differentiation of mast cells. Mechanistically, exerts its biological effects through a receptor composed of IL9R subunit and a signal transducing subunit IL2RG. Receptor stimulation results in the rapid activation of JAK1 and JAK3 kinase activities leading to STAT1, STAT3 and STAT5-mediated transcriptional programs. Induction of differentiation genes seems to be mediated by STAT1 alone, while protection of cells from apoptosis depends on STAT3 and STAT5. This is Interleukin-9 (IL9) from Homo sapiens (Human).